We begin with the raw amino-acid sequence, 51 residues long: Large ribosomal subunit protein eL39 (51 aa).

The protein belongs to the eukaryotic ribosomal protein eL39 family. Interacts with impact.

This chain is Large ribosomal subunit protein eL39 (rpl39), found in Ictalurus punctatus (Channel catfish).